Reading from the N-terminus, the 569-residue chain is Protein misato homolog 1 (569 aa).

A phosphoserine mark is found at serine 41 and serine 495.

It belongs to the misato family.

The protein resides in the mitochondrion outer membrane. It localises to the cytoplasm. In terms of biological role, involved in the regulation of mitochondrial distribution and morphology. Required for mitochondrial fusion and mitochondrial network formation. The sequence is that of Protein misato homolog 1 (MSTO1) from Macaca fascicularis (Crab-eating macaque).